Here is a 270-residue protein sequence, read N- to C-terminus: tRNA pseudouridine synthase A (270 aa).

The Nucleophile role is filled by Asp-60. The RNA binding stretch occupies residues 107–111 (FHARF). Substrate is bound at residue Tyr-118. Residues 168-172 (QCQSR) are interaction with tRNA.

The protein belongs to the tRNA pseudouridine synthase TruA family. As to quaternary structure, homodimer.

It carries out the reaction uridine(38/39/40) in tRNA = pseudouridine(38/39/40) in tRNA. In terms of biological role, formation of pseudouridine at positions 38, 39 and 40 in the anticodon stem and loop of transfer RNAs. This chain is tRNA pseudouridine synthase A, found in Klebsiella pneumoniae (strain 342).